We begin with the raw amino-acid sequence, 333 residues long: Phosphate acyltransferase (333 aa).

The protein belongs to the PlsX family. In terms of assembly, homodimer. Probably interacts with PlsY.

It localises to the cytoplasm. It catalyses the reaction a fatty acyl-[ACP] + phosphate = an acyl phosphate + holo-[ACP]. The protein operates within lipid metabolism; phospholipid metabolism. Its function is as follows. Catalyzes the reversible formation of acyl-phosphate (acyl-PO(4)) from acyl-[acyl-carrier-protein] (acyl-ACP). This enzyme utilizes acyl-ACP as fatty acyl donor, but not acyl-CoA. The chain is Phosphate acyltransferase from Pelagibacter ubique (strain HTCC1062).